Consider the following 457-residue polypeptide: tRNA-2-methylthio-N(6)-dimethylallyladenosine synthase (457 aa).

An MTTase N-terminal domain is found at 2–119 (KKVFIKTFGC…LPELIDARRR (118 aa)). Residues cysteine 11, cysteine 48, cysteine 82, cysteine 156, cysteine 160, and cysteine 163 each coordinate [4Fe-4S] cluster. The Radical SAM core domain occupies 142–375 (RVEGPSAFVS…QATIDANMAR (234 aa)). Residues 378 to 448 (EGMVGSVQRI…PHSLRGDVVE (71 aa)) form the TRAM domain.

It belongs to the methylthiotransferase family. MiaB subfamily. Monomer. The cofactor is [4Fe-4S] cluster.

Its subcellular location is the cytoplasm. It catalyses the reaction N(6)-dimethylallyladenosine(37) in tRNA + (sulfur carrier)-SH + AH2 + 2 S-adenosyl-L-methionine = 2-methylsulfanyl-N(6)-dimethylallyladenosine(37) in tRNA + (sulfur carrier)-H + 5'-deoxyadenosine + L-methionine + A + S-adenosyl-L-homocysteine + 2 H(+). Its function is as follows. Catalyzes the methylthiolation of N6-(dimethylallyl)adenosine (i(6)A), leading to the formation of 2-methylthio-N6-(dimethylallyl)adenosine (ms(2)i(6)A) at position 37 in tRNAs that read codons beginning with uridine. In Ralstonia nicotianae (strain ATCC BAA-1114 / GMI1000) (Ralstonia solanacearum), this protein is tRNA-2-methylthio-N(6)-dimethylallyladenosine synthase.